A 594-amino-acid chain; its full sequence is Ferredoxin--nitrite reductase, chloroplastic (594 aa).

The N-terminal 32 residues, 1-32, are a transit peptide targeting the chloroplast; that stretch reads MASLPVNKIIPSSTTLLSSSNNNRRRNNSSIR. Residues 13 to 22 are compositionally biased toward low complexity; that stretch reads STTLLSSSNN. The segment at 13-36 is disordered; that stretch reads STTLLSSSNNNRRRNNSSIRCQKA. Cys473, Cys479, Cys514, and Cys518 together coordinate [4Fe-4S] cluster. Cys518 is a siroheme binding site.

This sequence belongs to the nitrite and sulfite reductase 4Fe-4S domain family. As to quaternary structure, monomer. Siroheme is required as a cofactor. Requires [4Fe-4S] cluster as cofactor.

The protein resides in the plastid. The protein localises to the chloroplast. It catalyses the reaction 6 oxidized [2Fe-2S]-[ferredoxin] + NH4(+) + 2 H2O = nitrite + 6 reduced [2Fe-2S]-[ferredoxin] + 8 H(+). The protein operates within nitrogen metabolism; nitrate reduction (assimilation). This chain is Ferredoxin--nitrite reductase, chloroplastic (NIR), found in Spinacia oleracea (Spinach).